The following is a 154-amino-acid chain: Ribosome maturation factor RimP (154 aa).

It belongs to the RimP family.

It localises to the cytoplasm. Functionally, required for maturation of 30S ribosomal subunits. The chain is Ribosome maturation factor RimP from Clostridium perfringens (strain ATCC 13124 / DSM 756 / JCM 1290 / NCIMB 6125 / NCTC 8237 / Type A).